The sequence spans 588 residues: Pre-mRNA-splicing ATP-dependent RNA helicase PRP28 (588 aa).

Residues 15-94 form a disordered region; the sequence is NKKKGLDENT…PSKQNGSKFH (80 aa). 2 stretches are compositionally biased toward basic and acidic residues: residues 35–49 and 60–83; these read NKQERSKQERLKENE and AKVEIKKVNSRDDSFFNETNDKKR. The residue at position 69 (Ser69) is a Phosphoserine. A Q motif motif is present at residues 172–202; sequence RNWEELNIIPRDLLRVIIQELRFPSPTPIQR. Residues 208–399 form the Helicase ATP-binding domain; the sequence is VCNMKQYRDF…AGYMQKPVYA (192 aa). 221–228 lines the ATP pocket; that stretch reads ASTGSGKT. A DEAD box motif is present at residues 341 to 344; it reads DEAD. Positions 427–579 constitute a Helicase C-terminal domain; sequence KLKPIVAKYD…EAVKNKYNVG (153 aa).

Belongs to the DEAD box helicase family. DDX23/PRP28 subfamily. Component of the U5 snRNP complex, composed of at least BRR2, PRP8, PRP28, DIB1, LIN1, SMB1, SMD1, SMD2, SMD3, SME1, SMX2, SMX3, and SNU114, associated with the U5 snRNA.

It localises to the cytoplasm. The protein localises to the nucleus. It carries out the reaction ATP + H2O = ADP + phosphate + H(+). ATP-dependent RNA helicase involved in mRNA splicing. May destabilize the U1/5'-splice site duplex to permit an effective competition for the 5'-splice site by the U6 snRNA, resulting in the switch between U1 and U6 at the 5'-splice site. May also act to unwind the U4/U6 base-pairing interaction in the U4/U6/U5 snRNP, facilitating the first covalent step of splicing. The chain is Pre-mRNA-splicing ATP-dependent RNA helicase PRP28 (PRP28) from Saccharomyces cerevisiae (strain ATCC 204508 / S288c) (Baker's yeast).